Reading from the N-terminus, the 228-residue chain is Large ribosomal subunit protein uL1 (228 aa).

The protein belongs to the universal ribosomal protein uL1 family. In terms of assembly, part of the 50S ribosomal subunit.

Its function is as follows. Binds directly to 23S rRNA. The L1 stalk is quite mobile in the ribosome, and is involved in E site tRNA release. Protein L1 is also a translational repressor protein, it controls the translation of the L11 operon by binding to its mRNA. The sequence is that of Large ribosomal subunit protein uL1 from Clavibacter sepedonicus (Clavibacter michiganensis subsp. sepedonicus).